The following is a 218-amino-acid chain: MAAQPQAPSAGGRPRAGKAVKSVARPAKLSRESIVEGALTFLDREGWDSLTINALATQLGTKGPSLYNHVDSLEDLRRAVRIRVIDDIITMLNRVGAGRARDDAVLVMAGAYRSYAHHHPGRYSAFTRMPLGGDDPEYTAATRGAAAPVIAVLSSYGLDGEQAFYAALEFWSALHGFVLLEMTGVMDDIDTDAVFTDMVLRLAAGMERRTTHGGTAST.

Residues 1 to 24 (MAAQPQAPSAGGRPRAGKAVKSVA) form a disordered region. One can recognise an HTH tetR-type domain in the interval 28–88 (KLSRESIVEG…AVRIRVIDDI (61 aa)). The segment at residues 51–70 (TINALATQLGTKGPSLYNHV) is a DNA-binding region (H-T-H motif). At threonine 57 the chain carries Phosphothreonine; by PknH.

In terms of processing, phosphorylated on Thr-57 by PknH.

This is an uncharacterized protein from Mycobacterium tuberculosis (strain ATCC 25618 / H37Rv).